Consider the following 75-residue polypeptide: Conotoxin Vn5.5 (75 aa).

The signal sequence occupies residues 1–19; the sequence is MLCLPVFIILLLLASPAAP. The propeptide occupies 20 to 59; that stretch reads NPLEKRIQSDLIRAALEDADMKTDEREIVNIIDSISDVAK. A Pyrrolidone carboxylic acid modification is found at Q60.

The protein belongs to the conotoxin T superfamily. Post-translationally, contains 2 disulfide bonds that can be either 'C1-C3, C2-C4' or 'C1-C4, C2-C3', since these disulfide connectivities have been observed for conotoxins with cysteine framework V (for examples, see AC P0DQQ7 and AC P81755). Expressed by the venom duct.

The protein localises to the secreted. This is Conotoxin Vn5.5 from Conus ventricosus (Mediterranean cone).